The sequence spans 223 residues: ATP phosphoribosyltransferase (223 aa).

The protein belongs to the ATP phosphoribosyltransferase family. Short subfamily. In terms of assembly, heteromultimer composed of HisG and HisZ subunits.

Its subcellular location is the cytoplasm. It catalyses the reaction 1-(5-phospho-beta-D-ribosyl)-ATP + diphosphate = 5-phospho-alpha-D-ribose 1-diphosphate + ATP. It participates in amino-acid biosynthesis; L-histidine biosynthesis; L-histidine from 5-phospho-alpha-D-ribose 1-diphosphate: step 1/9. Its function is as follows. Catalyzes the condensation of ATP and 5-phosphoribose 1-diphosphate to form N'-(5'-phosphoribosyl)-ATP (PR-ATP). Has a crucial role in the pathway because the rate of histidine biosynthesis seems to be controlled primarily by regulation of HisG enzymatic activity. The sequence is that of ATP phosphoribosyltransferase from Bordetella bronchiseptica (strain ATCC BAA-588 / NCTC 13252 / RB50) (Alcaligenes bronchisepticus).